The following is a 22-amino-acid chain: Mu-conotoxin CnIIIA (22 aa).

Intrachain disulfides connect C3/C15, C4/C21, and C10/C22. The residue at position 22 (C22) is a Cysteine amide.

This sequence belongs to the conotoxin M superfamily. Expressed by the venom duct. Has not been isolated from the crude venom.

Its subcellular location is the secreted. Mu-conotoxins block voltage-gated sodium channels (Nav). This synthetic toxin moderately blocks rNav1.1/SCN1A, rNav1.2/SCN2A, rNav1.3/SCN3A, rNav1.4/SCN4A, rNav1.5/SCN5A, and mNav1.6/SCN8A. This block is very slowly reversible. Causes seizures when injected intracranially into mice. The sequence is that of Mu-conotoxin CnIIIA from Conus consors (Singed cone).